We begin with the raw amino-acid sequence, 173 residues long: Shikimate kinase 1 (173 aa).

14-19 is an ATP binding site; it reads GAGKST. Residue Ser-18 participates in Mg(2+) binding. 3 residues coordinate substrate: Asp-36, Arg-60, and Gly-82. ATP is bound at residue Arg-120. Residue Arg-140 participates in substrate binding. ATP is bound at residue Gln-157.

Belongs to the shikimate kinase family. Monomer. Mg(2+) serves as cofactor.

It localises to the cytoplasm. It catalyses the reaction shikimate + ATP = 3-phosphoshikimate + ADP + H(+). The protein operates within metabolic intermediate biosynthesis; chorismate biosynthesis; chorismate from D-erythrose 4-phosphate and phosphoenolpyruvate: step 5/7. In terms of biological role, catalyzes the specific phosphorylation of the 3-hydroxyl group of shikimic acid using ATP as a cosubstrate. In Sodalis glossinidius (strain morsitans), this protein is Shikimate kinase 1.